The primary structure comprises 255 residues: Vitamin B12 import ATP-binding protein BtuD (255 aa).

The region spanning 2 to 240 (MRVKHIAVGS…AGLAEVFKTQ (239 aa)) is the ABC transporter domain. Residue 30-37 (GPNGSGKS) coordinates ATP.

This sequence belongs to the ABC transporter superfamily. Vitamin B12 importer (TC 3.A.1.13.1) family. In terms of assembly, the complex is composed of two ATP-binding proteins (BtuD), two transmembrane proteins (BtuC) and a solute-binding protein (BtuF).

The protein localises to the cell inner membrane. It carries out the reaction an R-cob(III)alamin(out) + ATP + H2O = an R-cob(III)alamin(in) + ADP + phosphate + H(+). In terms of biological role, part of the ABC transporter complex BtuCDF involved in vitamin B12 import. Responsible for energy coupling to the transport system. The polypeptide is Vitamin B12 import ATP-binding protein BtuD (Vibrio parahaemolyticus serotype O3:K6 (strain RIMD 2210633)).